The following is a 1164-amino-acid chain: Avirulence protein AvrBs3 (1164 aa).

Disordered regions lie at residues 1 to 68 (MDPI…SAGS) and 128 to 152 (ARPP…PAAQ). The segment covering 131–141 (PRAKPAPRRRA) has biased composition (basic residues). Low complexity predominate over residues 142-151 (AQPSDASPAA). Residues 225 to 254 (IVGVGKQWSGARALEALLTVAGELRGPPLQ) form a Cryptic repeat -1 repeat. Residues 255–288 (LDTGQLLKIAKRGGVTAVEAVHAWRNALTGAPLN) form a Cryptic repeat 0 repeat. Core repeat repeat units lie at residues 289-322 (LTPE…QAHG), 323-356 (LTPQ…QAHG), 357-390 (LTPQ…QAHG), 391-424 (LTPE…QAHG), 425-458 (LTPE…QAHG), 459-492 (LTPE…QAHG), 493-526 (LTPE…QAHG), 527-560 (LTPE…QAHG), 561-594 (LTPE…QAHG), 595-628 (LTPQ…QAHG), 629-662 (LTPE…QAHG), 663-696 (LTPE…QAHG), 697-730 (LTPE…QAHG), 731-764 (LTPE…QAHG), 765-798 (LTPE…QAHG), 799-832 (LTPQ…QAHG), and 833-866 (LTPE…QAHG). One copy of the Core repeat 17.5 repeat lies at 867–886 (LTPQQVVAIASNGGGRPALE). A Nuclear localization signal NLS1 motif is present at residues 1021-1024 (KRAK). The span at 1048–1060 (DLDAPSPMHEGDQ) shows a compositional bias: basic and acidic residues. The interval 1048–1091 (DLDAPSPMHEGDQTRASSRKRSRSDRAVTGPSAQQSFEVRVPEQ) is disordered. The Nuclear localization signal NLS2 motif lies at 1067 to 1070 (KRSR). The short motif at 1104–1107 (KRPR) is the Nuclear localization signal NLS3 element. Positions 1135–1164 (QDEDPFAGAADDFPAFNEEELAWLMELLPQ) are acidic activation domain AAD.

It belongs to the transcription activator-like effector (TALE) family. In terms of assembly, forms a homodimer in the plant cell cytoplasm, prior to nuclear import. Interacts with the plant cell importin alpha-1 (Caimp alpha-1) and importin alpha-2 (Caimp alpha-2) via the nuclear localization signal NLS2, but not via NLS3.

Its subcellular location is the secreted. It is found in the host nucleus. Functionally, avirulence protein. Acts as a transcription factor in C.annuum plants. In susceptible plants lacking the Bs3 resistance gene induces expression of a number of genes, including genes homologous to a family of auxin-induced genes, alpha-expansin genes, pectate lyase, anthocyanidin glucoside rhamnosyl transferase and at least one transcription factor, UPA20. Their expression leads to plant hypertrophy in mesophyll cells, probably mainly mediated by UPA20. In resistant plants induces the hypersensitive response (HR), by inducing transcription of plant Bs3 which induces HR; a mutated AvrBs3 missing repeats 11-14 does not induce expression of Bs3 but does induce Bs3-E, a Bs3 allele with a modified promoter. Binds DNA corresponding to the upa-box in sequence-specific manner. In Xanthomonas euvesicatoria, this protein is Avirulence protein AvrBs3 (avrBs3).